The primary structure comprises 428 residues: Serine--tRNA ligase (428 aa).

Threonine 231–glutamate 233 contacts L-serine. Arginine 262–glutamate 264 serves as a coordination point for ATP. Glutamate 285 is a binding site for L-serine. Glutamate 349–serine 352 provides a ligand contact to ATP. Residue serine 385 participates in L-serine binding.

The protein belongs to the class-II aminoacyl-tRNA synthetase family. Type-1 seryl-tRNA synthetase subfamily. In terms of assembly, homodimer. The tRNA molecule binds across the dimer.

It localises to the cytoplasm. It carries out the reaction tRNA(Ser) + L-serine + ATP = L-seryl-tRNA(Ser) + AMP + diphosphate + H(+). It catalyses the reaction tRNA(Sec) + L-serine + ATP = L-seryl-tRNA(Sec) + AMP + diphosphate + H(+). Its pathway is aminoacyl-tRNA biosynthesis; selenocysteinyl-tRNA(Sec) biosynthesis; L-seryl-tRNA(Sec) from L-serine and tRNA(Sec): step 1/1. Functionally, catalyzes the attachment of serine to tRNA(Ser). Is also able to aminoacylate tRNA(Sec) with serine, to form the misacylated tRNA L-seryl-tRNA(Sec), which will be further converted into selenocysteinyl-tRNA(Sec). This is Serine--tRNA ligase from Methylorubrum extorquens (strain CM4 / NCIMB 13688) (Methylobacterium extorquens).